Consider the following 365-residue polypeptide: Protein Wnt-6 (365 aa).

An N-terminal signal peptide occupies residues 1 to 24 (MLPPLPSRLGLLLLLLLCPAHVGG). Cystine bridges form between Cys76/Cys87, Cys124/Cys132, Cys134/Cys172, Cys222/Cys236, Cys224/Cys231, Cys294/Cys325, Cys310/Cys320, Cys324/Cys364, Cys340/Cys355, Cys342/Cys352, and Cys347/Cys348. Asn86 carries an N-linked (GlcNAc...) asparagine glycan. Residues 140 to 158 (RAPPRPSGLPGTPGPPGPA) show a composition bias toward pro residues. The interval 140–164 (RAPPRPSGLPGTPGPPGPAGSPEGS) is disordered. Ser228 carries the O-palmitoleoyl serine; by PORCN lipid modification. N-linked (GlcNAc...) asparagine glycosylation occurs at Asn311.

Belongs to the Wnt family. Interacts with PORCN. In terms of processing, palmitoleoylation is required for efficient binding to frizzled receptors. Depalmitoleoylation leads to Wnt signaling pathway inhibition. As to expression, expressed in gastric cancer cell lines and gastric cancer tissues (at protein level). Detected in the apical gland region of the gastric foveolar epithelium (at protein level).

It localises to the secreted. It is found in the extracellular space. The protein resides in the extracellular matrix. Functionally, ligand for members of the frizzled family of seven transmembrane receptors. Probable developmental protein. May be a signaling molecule which affects the development of discrete regions of tissues. Is likely to signal over only few cell diameters. Together with CAV1 may promote chemoresistance of gastric cancer cells to DNA-damaging anthracycline drugs through the activation of the canonical Wnt receptor signaling pathway. The protein is Protein Wnt-6 (WNT6) of Homo sapiens (Human).